Here is an 897-residue protein sequence, read N- to C-terminus: MMQQQKPGKPKKINRIDKIKRLQINRSRRPDINQTVPSPLFYVRIVVTWLGMVSLDAMTGFRFELLWPTWLMIRAAAESIQMRNQHCVTTIANPTAARFSVLFICVTATSDLICYLFIPIRMLIFLATTYVWISLYYHTQGGFLRSLATVYGGERLQSWPIVFITCFIVIFELFLRIRSHPILISFFPNVAEYAGVSPVWPRSLNAFFGAHSIGYPVILITVSMHYYFNEWKLRRKQCDVSNRNEQLFRILVEGLPAEYEGPKDYTSQQCLEDDLYYLDPPVQTLQPMQAIQAASATPPTSSKKNGIHKRNGDVTSSTTTSSRKKKHNGNSGFNSTPPNDKKKGKSIRDVDMDDGDDSDDDYSYRDTSSSTIEDQRRGGGISIIRFIFSSAAWLFSFVFESSTPSENSLSNQQIDDDEDYEDGDGDKKNGRTDSMTSTTKGRANTMPSTTRSQNNNNSQKQQKQSNGKSHHQHSSHQNNHQKSNGNSNGHARGFAAVRDSSHDTNASNETDIRSMSRELESLRSEISSRRSQEEDFKLQVSMHESNETRLSQQLSNMRLKVEQMEIKCSSIERHRESDKHQLEQAERKYADLLGKKAEIEATLSAERKARMEVTSKKYDVAEHQRERERQLESEIDKLRIELKSKDESNMRMESELHGLRNYKEENDIDSLNMELRFVRDKSHQMEESLAGENKLKQSLFKCLGDARDTIKSLERRVQEFQIKNGSSIGGGSSETLMNGRSSTEANNENDTTASDQSSPHQHSAMGSPVPFAKMPLSVNVSNRHGSPFNGKVSPIASIGSVLAAAGGPAPPDYMMAVGANVTATTGPVPQKQPRAGFHGISRYNEFTNIASGGEHRLFDTPASAISASAINGSNPEDDFLMNKGKFGAPSQPAARLA.

Transmembrane regions (helical) follow at residues 113 to 133 (ICYL…YVWI), 157 to 177 (QSWP…FLRI), 181 to 201 (PILI…PVWP), and 204 to 224 (LNAF…TVSM). Polar residues-rich tracts occupy residues 291-304 (IQAA…SSKK) and 329-338 (GNSGFNSTPP). Residues 291 to 375 (IQAASATPPT…DTSSSTIEDQ (85 aa)) are disordered. The segment covering 351-361 (DMDDGDDSDDD) has biased composition (acidic residues). Residues 379–399 (GGISIIRFIFSSAAWLFSFVF) traverse the membrane as a helical segment. Residues 403 to 413 (TPSENSLSNQQ) show a composition bias toward polar residues. Disordered regions lie at residues 403-535 (TPSE…QEED) and 724-770 (NGSS…SPVP). The span at 414–424 (IDDDEDYEDGD) shows a compositional bias: acidic residues. Over residues 432–451 (TDSMTSTTKGRANTMPSTTR) the composition is skewed to polar residues. Composition is skewed to low complexity over residues 452-467 (SQNN…QSNG) and 475-490 (SHQN…SNGH). Residues 503–726 (DTNASNETDI…VQEFQIKNGS (224 aa)) adopt a coiled-coil conformation. Over residues 510-535 (TDIRSMSRELESLRSEISSRRSQEED) the composition is skewed to basic and acidic residues. Residues 734–761 (ETLMNGRSSTEANNENDTTASDQSSPHQ) show a composition bias toward polar residues.

In terms of tissue distribution, strong expression in many neurons, very weak expression is also detected in others tissues.

Its subcellular location is the rough endoplasmic reticulum membrane. The protein localises to the nucleus membrane. In terms of biological role, plays a role in the regulation of neuronal activity. In AWA and AWC neurons, plays a role in regulating olfactory adaptation by controlling the forgetting sensory responses to odorants such as diacetyl and isoamyl alcohol. May play a role in regulating daf-7 expression in ASI neurons in response to bacterial small RNAs. In ASI neurons, promotes dauer formation in response to pheromones such as the ascarosides ascr#2 and ascr#3. This Caenorhabditis elegans protein is Macoilin.